The following is a 194-amino-acid chain: Cyclin-dependent kinase inhibitor 4 (194 aa).

Residues 49–58 (LELRSRRLEK) are compositionally biased toward basic and acidic residues. Disordered regions lie at residues 49–70 (LELR…PRRR) and 107–139 (TRET…SHCK).

Belongs to the CDI family. ICK/KRP subfamily.

The protein is Cyclin-dependent kinase inhibitor 4 (KRP4) of Oryza sativa subsp. japonica (Rice).